Consider the following 432-residue polypeptide: 5'-deoxyadenosine deaminase (432 aa).

Zn(2+) is bound by residues histidine 63 and histidine 65. Residues glutamate 92 and histidine 184 each contribute to the substrate site. Histidine 211 is a Zn(2+) binding site. Glutamate 214 and aspartate 299 together coordinate substrate. Residue aspartate 299 participates in Zn(2+) binding.

It belongs to the metallo-dependent hydrolases superfamily. MTA/SAH deaminase family. In terms of assembly, homotetramer. The cofactor is Zn(2+).

The catalysed reaction is 5'-deoxyadenosine + H2O + H(+) = 5'-deoxyinosine + NH4(+). It carries out the reaction S-adenosyl-L-homocysteine + H2O + H(+) = S-inosyl-L-homocysteine + NH4(+). The enzyme catalyses S-methyl-5'-thioadenosine + H2O + H(+) = S-methyl-5'-thioinosine + NH4(+). It catalyses the reaction adenosine + H2O + H(+) = inosine + NH4(+). The protein operates within amino-acid biosynthesis; S-adenosyl-L-methionine biosynthesis. Its function is as follows. Catalyzes the deamination of three SAM-derived enzymatic products, namely 5'-deoxyadenosine, S-adenosyl-L-homocysteine, and 5'-methylthioadenosine, to produce the inosine analogs. Can also deaminate adenosine. The preferred substrate for this enzyme is 5'-deoxyadenosine, but all these substrates are efficiently deaminated. Likely functions in a S-adenosyl-L-methionine (SAM) recycling pathway from S-adenosyl-L-homocysteine (SAH) produced from SAM-dependent methylation reactions. May also be involved in the recycling of 5'-deoxyadenosine, whereupon the 5'-deoxyribose moiety of 5'-deoxyinosine is further metabolized to deoxyhexoses used for the biosynthesis of aromatic amino acids in methanogens. The polypeptide is 5'-deoxyadenosine deaminase (Methanosarcina mazei (strain ATCC BAA-159 / DSM 3647 / Goe1 / Go1 / JCM 11833 / OCM 88) (Methanosarcina frisia)).